The primary structure comprises 245 residues: 1-(5-phosphoribosyl)-5-[(5-phosphoribosylamino)methylideneamino] imidazole-4-carboxamide isomerase (245 aa).

Asp7 functions as the Proton acceptor in the catalytic mechanism. The active-site Proton donor is the Asp129.

It belongs to the HisA/HisF family.

The protein resides in the cytoplasm. It carries out the reaction 1-(5-phospho-beta-D-ribosyl)-5-[(5-phospho-beta-D-ribosylamino)methylideneamino]imidazole-4-carboxamide = 5-[(5-phospho-1-deoxy-D-ribulos-1-ylimino)methylamino]-1-(5-phospho-beta-D-ribosyl)imidazole-4-carboxamide. Its pathway is amino-acid biosynthesis; L-histidine biosynthesis; L-histidine from 5-phospho-alpha-D-ribose 1-diphosphate: step 4/9. The sequence is that of 1-(5-phosphoribosyl)-5-[(5-phosphoribosylamino)methylideneamino] imidazole-4-carboxamide isomerase from Shewanella loihica (strain ATCC BAA-1088 / PV-4).